Here is a 93-residue protein sequence, read N- to C-terminus: MKKTLILLAMVAALMILPFFINHGGEFGGSDGEAESQIQVVAPDYQPWFQPLYEPASGEIESLLFTLQGSLGAAVIFYILGYARGRQRRDDRV.

Helical transmembrane passes span 5-25 (LILLAMVAALMILPFFINHGG) and 63-83 (LLFTLQGSLGAAVIFYILGYA).

It belongs to the CbiN family. In terms of assembly, forms an energy-coupling factor (ECF) transporter complex composed of an ATP-binding protein (A component, CbiO), a transmembrane protein (T component, CbiQ) and 2 possible substrate-capture proteins (S components, CbiM and CbiN) of unknown stoichimetry.

The protein localises to the cell inner membrane. Its pathway is cofactor biosynthesis; adenosylcobalamin biosynthesis. Functionally, part of the energy-coupling factor (ECF) transporter complex CbiMNOQ involved in cobalt import. The protein is Cobalt transport protein CbiN of Klebsiella pneumoniae subsp. pneumoniae (strain ATCC 700721 / MGH 78578).